A 510-amino-acid chain; its full sequence is Pectinesterase 2 (510 aa).

The first 19 residues, 1–19 (MALRILITVSLVLFSLSHT), serve as a signal peptide directing secretion. N-linked (GlcNAc...) asparagine glycans are attached at residues Asn110 and Asn158. Thr275 and Gln305 together coordinate substrate. Catalysis depends on Asp328, which acts as the Proton donor. The cysteines at positions 342 and 362 are disulfide-linked. Residue Asp349 is the Nucleophile of the active site. N-linked (GlcNAc...) asparagine glycans are attached at residues Asn371 and Asn385. Substrate contacts are provided by Arg416 and Trp418.

This sequence in the N-terminal section; belongs to the PMEI family. It in the C-terminal section; belongs to the pectinesterase family. Expressed at low levels in young leaves, young bark, young fruit, mature fruit vesicles, shoots and flower buds, young bark and juice vesicles. In both leaf and fruit abscission zones, and mature leaves, expression was initially undetectable but increased markedly following ethylene treatment.

The protein localises to the secreted. It is found in the cell wall. It catalyses the reaction [(1-&gt;4)-alpha-D-galacturonosyl methyl ester](n) + n H2O = [(1-&gt;4)-alpha-D-galacturonosyl](n) + n methanol + n H(+). It participates in glycan metabolism; pectin degradation; 2-dehydro-3-deoxy-D-gluconate from pectin: step 1/5. Functionally, acts in the modification of cell walls via demethylesterification of cell wall pectin. In Citrus sinensis (Sweet orange), this protein is Pectinesterase 2 (PECS-2.1).